A 429-amino-acid chain; its full sequence is Serine hydroxymethyltransferase 1 (429 aa).

(6S)-5,6,7,8-tetrahydrofolate contacts are provided by residues L125 and 129–131 (GHL). Residue K234 is modified to N6-(pyridoxal phosphate)lysine.

The protein belongs to the SHMT family. In terms of assembly, homodimer. The cofactor is pyridoxal 5'-phosphate.

Its subcellular location is the cytoplasm. The catalysed reaction is (6R)-5,10-methylene-5,6,7,8-tetrahydrofolate + glycine + H2O = (6S)-5,6,7,8-tetrahydrofolate + L-serine. It functions in the pathway one-carbon metabolism; tetrahydrofolate interconversion. It participates in amino-acid biosynthesis; glycine biosynthesis; glycine from L-serine: step 1/1. Catalyzes the reversible interconversion of serine and glycine with tetrahydrofolate (THF) serving as the one-carbon carrier. This reaction serves as the major source of one-carbon groups required for the biosynthesis of purines, thymidylate, methionine, and other important biomolecules. Also exhibits THF-independent aldolase activity toward beta-hydroxyamino acids, producing glycine and aldehydes, via a retro-aldol mechanism. In Agrobacterium fabrum (strain C58 / ATCC 33970) (Agrobacterium tumefaciens (strain C58)), this protein is Serine hydroxymethyltransferase 1.